The sequence spans 328 residues: Stress response kinase A (328 aa).

The active-site Proton acceptor is the D201. Mg(2+)-binding residues include N206 and D217. D217 is an active-site residue.

This sequence belongs to the SrkA/RdoA protein kinase family. Monomer. The cofactor is Mg(2+).

It localises to the cytoplasm. The catalysed reaction is L-seryl-[protein] + ATP = O-phospho-L-seryl-[protein] + ADP + H(+). It carries out the reaction L-threonyl-[protein] + ATP = O-phospho-L-threonyl-[protein] + ADP + H(+). Functionally, a protein kinase that phosphorylates Ser and Thr residues. Probably acts to suppress the effects of stress linked to accumulation of reactive oxygen species. Probably involved in the extracytoplasmic stress response. The chain is Stress response kinase A from Escherichia coli O6:H1 (strain CFT073 / ATCC 700928 / UPEC).